We begin with the raw amino-acid sequence, 250 residues long: DNA polymerase sliding clamp (250 aa).

Belongs to the PCNA family. In terms of assembly, homotrimer. The subunits circularize to form a toroid; DNA passes through its center. Replication factor C (RFC) is required to load the toroid on the DNA.

In terms of biological role, sliding clamp subunit that acts as a moving platform for DNA processing. Responsible for tethering the catalytic subunit of DNA polymerase and other proteins to DNA during high-speed replication. This Methanococcus maripaludis (strain C5 / ATCC BAA-1333) protein is DNA polymerase sliding clamp.